The sequence spans 312 residues: DNA-directed RNA polymerase subunit alpha (312 aa).

Positions 1 to 229 are alpha N-terminal domain (alpha-NTD); it reads MLQYQIDRIE…ELFQPLATVT (229 aa). The alpha C-terminal domain (alpha-CTD) stretch occupies residues 239-312; it reads EPSAEAQIPL…ISIPQSRTSA (74 aa).

Belongs to the RNA polymerase alpha chain family. In cyanobacteria the RNAP catalytic core is composed of 2 alpha, 1 beta, 1 beta', 1 gamma and 1 omega subunit. When a sigma factor is associated with the core the holoenzyme is formed, which can initiate transcription.

It catalyses the reaction RNA(n) + a ribonucleoside 5'-triphosphate = RNA(n+1) + diphosphate. Its function is as follows. DNA-dependent RNA polymerase catalyzes the transcription of DNA into RNA using the four ribonucleoside triphosphates as substrates. The sequence is that of DNA-directed RNA polymerase subunit alpha from Synechococcus sp. (strain CC9605).